A 321-amino-acid polypeptide reads, in one-letter code: Tetraacyldisaccharide 4'-kinase (321 aa).

54–61 (SVGGTGKT) lines the ATP pocket.

It belongs to the LpxK family.

It carries out the reaction a lipid A disaccharide + ATP = a lipid IVA + ADP + H(+). It functions in the pathway glycolipid biosynthesis; lipid IV(A) biosynthesis; lipid IV(A) from (3R)-3-hydroxytetradecanoyl-[acyl-carrier-protein] and UDP-N-acetyl-alpha-D-glucosamine: step 6/6. Its function is as follows. Transfers the gamma-phosphate of ATP to the 4'-position of a tetraacyldisaccharide 1-phosphate intermediate (termed DS-1-P) to form tetraacyldisaccharide 1,4'-bis-phosphate (lipid IVA). This chain is Tetraacyldisaccharide 4'-kinase, found in Rickettsia peacockii (strain Rustic).